Consider the following 308-residue polypeptide: MTNDALIAALAHLVSEGRNPDTMDIDLLPSLDIVQRLNQQDKLVPLAVEKVLPEIALAVDKITDAFKVGGRLVYMGAGTSGRLGVLDASECPPTFGVSDKMVVGLIAGGPEAILKAKEGAEDSPVLGEQDLKDIKFTNLDVVVGIAASGRTPYVIGGLEYANEIGATTIALSCNPDSPIADIADVAISPVVGPEALTGSTRLKSGTAQKLVLNMLTTASMIRLGKSYQNLMVDVKATNNKLVARAARIVMQATDCSKEQATEVLKQTDYEVKLAILMILTDLDIESARAHLHHQDGFLRKAVESHQPK.

Positions 62 to 225 (ITDAFKVGGR…TTASMIRLGK (164 aa)) constitute an SIS domain. E90 acts as the Proton donor in catalysis. The active site involves E121.

This sequence belongs to the GCKR-like family. MurNAc-6-P etherase subfamily. As to quaternary structure, homodimer.

It catalyses the reaction N-acetyl-D-muramate 6-phosphate + H2O = N-acetyl-D-glucosamine 6-phosphate + (R)-lactate. The protein operates within amino-sugar metabolism; 1,6-anhydro-N-acetylmuramate degradation. It participates in amino-sugar metabolism; N-acetylmuramate degradation. Its pathway is cell wall biogenesis; peptidoglycan recycling. Functionally, specifically catalyzes the cleavage of the D-lactyl ether substituent of MurNAc 6-phosphate, producing GlcNAc 6-phosphate and D-lactate. Together with AnmK, is also required for the utilization of anhydro-N-acetylmuramic acid (anhMurNAc) either imported from the medium or derived from its own cell wall murein, and thus plays a role in cell wall recycling. This Vibrio campbellii (strain ATCC BAA-1116) protein is N-acetylmuramic acid 6-phosphate etherase.